The sequence spans 1066 residues: Isoleucine--tRNA ligase (1066 aa).

Residues Pro-49–Thr-59 carry the 'HIGH' region motif. A 'KMSKS' region motif is present at residues Lys-625–Ser-629. Lys-628 serves as a coordination point for ATP.

This sequence belongs to the class-I aminoacyl-tRNA synthetase family. IleS type 2 subfamily. In terms of assembly, monomer. Zn(2+) is required as a cofactor.

It is found in the cytoplasm. The enzyme catalyses tRNA(Ile) + L-isoleucine + ATP = L-isoleucyl-tRNA(Ile) + AMP + diphosphate. Its function is as follows. Catalyzes the attachment of isoleucine to tRNA(Ile). As IleRS can inadvertently accommodate and process structurally similar amino acids such as valine, to avoid such errors it has two additional distinct tRNA(Ile)-dependent editing activities. One activity is designated as 'pretransfer' editing and involves the hydrolysis of activated Val-AMP. The other activity is designated 'posttransfer' editing and involves deacylation of mischarged Val-tRNA(Ile). This Pyrococcus furiosus (strain ATCC 43587 / DSM 3638 / JCM 8422 / Vc1) protein is Isoleucine--tRNA ligase.